Consider the following 353-residue polypeptide: S-adenosylmethionine:tRNA ribosyltransferase-isomerase (353 aa).

This sequence belongs to the QueA family. Monomer.

The protein resides in the cytoplasm. It catalyses the reaction 7-aminomethyl-7-carbaguanosine(34) in tRNA + S-adenosyl-L-methionine = epoxyqueuosine(34) in tRNA + adenine + L-methionine + 2 H(+). The protein operates within tRNA modification; tRNA-queuosine biosynthesis. In terms of biological role, transfers and isomerizes the ribose moiety from AdoMet to the 7-aminomethyl group of 7-deazaguanine (preQ1-tRNA) to give epoxyqueuosine (oQ-tRNA). This is S-adenosylmethionine:tRNA ribosyltransferase-isomerase from Maricaulis maris (strain MCS10) (Caulobacter maris).